Here is a 375-residue protein sequence, read N- to C-terminus: Lipid droplet hydrolase 1 (375 aa).

One can recognise an AB hydrolase-1 domain in the interval 88-358 (VFVFVPGLAG…CSHNLCFDRP (271 aa)). The Charge relay system role is filled by Ser-177. The Microbody targeting signal signature appears at 373–375 (SKL).

It belongs to the AB hydrolase superfamily. Lipase family.

It localises to the lipid droplet. The catalysed reaction is a triacylglycerol + H2O = a diacylglycerol + a fatty acid + H(+). Serine hydrolase required for the maintenance of steady state level of non-polar and polar lipids of lipid droplets and thus plays a role in maintaining the lipids homeostasis. Exhibits both esterase and triacylglycerol lipase activity. This is Lipid droplet hydrolase 1 from Saccharomyces cerevisiae (strain ATCC 204508 / S288c) (Baker's yeast).